A 415-amino-acid polypeptide reads, in one-letter code: Diaminopimelate decarboxylase (415 aa).

N6-(pyridoxal phosphate)lysine is present on K54. Residues G223 and 264–267 contribute to the pyridoxal 5'-phosphate site; that span reads EPGR. Substrate is bound by residues R267, R303, and Y307. C338 functions as the Proton donor in the catalytic mechanism. Residues E339 and Y374 each coordinate substrate. Pyridoxal 5'-phosphate is bound at residue Y374.

The protein belongs to the Orn/Lys/Arg decarboxylase class-II family. LysA subfamily. As to quaternary structure, homodimer. Requires pyridoxal 5'-phosphate as cofactor.

The enzyme catalyses meso-2,6-diaminopimelate + H(+) = L-lysine + CO2. It functions in the pathway amino-acid biosynthesis; L-lysine biosynthesis via DAP pathway; L-lysine from DL-2,6-diaminopimelate: step 1/1. Specifically catalyzes the decarboxylation of meso-diaminopimelate (meso-DAP) to L-lysine. This is Diaminopimelate decarboxylase from Buchnera aphidicola subsp. Acyrthosiphon pisum (strain APS) (Acyrthosiphon pisum symbiotic bacterium).